The following is a 296-amino-acid chain: Small ribosomal subunit protein uS2 (296 aa).

Disordered stretches follow at residues 1–24 and 270–296; these read MNTKKEEVVSSPEATVEKKQTQSQ and HELKKSEEASEVKAASTKEKLTEEASQ.

It belongs to the universal ribosomal protein uS2 family.

The sequence is that of Small ribosomal subunit protein uS2 from Mycoplasmopsis synoviae (strain 53) (Mycoplasma synoviae).